The following is a 496-amino-acid chain: NADP-dependent glyceraldehyde-3-phosphate dehydrogenase (496 aa).

Residues Arg-116 and 169-170 (NY) contribute to the substrate site. Residues Lys-192, Thr-195, and Asp-230 each contribute to the NADP(+) site. Residue 245 to 249 (GGDTG) participates in NAD(+) binding. Residue Glu-264 is the Proton acceptor of the active site. A substrate-binding site is contributed by 297 to 299 (RCT). Cys-298 (nucleophile) is an active-site residue. An NADP(+)-binding site is contributed by Glu-391. Arg-451 is a substrate binding site.

Belongs to the aldehyde dehydrogenase family.

Its subcellular location is the cytoplasm. It carries out the reaction D-glyceraldehyde 3-phosphate + NADP(+) + H2O = (2R)-3-phosphoglycerate + NADPH + 2 H(+). In terms of biological role, important as a means of generating NADPH for biosynthetic reactions. The chain is NADP-dependent glyceraldehyde-3-phosphate dehydrogenase (GAPN) from Pisum sativum (Garden pea).